A 500-amino-acid polypeptide reads, in one-letter code: Taxoid 7-beta-hydroxylase (500 aa).

Residues 24-44 form a helical membrane-spanning segment; the sequence is PAILSTALTAIAGIIVLLVIT. A heme-binding site is contributed by cysteine 446.

The protein belongs to the cytochrome P450 family.

The protein resides in the microsome membrane. It carries out the reaction taxusin + reduced [NADPH--hemoprotein reductase] + O2 = 7beta-hydroxytaxusin + oxidized [NADPH--hemoprotein reductase] + H2O + H(+). It catalyses the reaction 2alpha-hydroxytaxusin + reduced [NADPH--hemoprotein reductase] + O2 = 2alpha,7beta-dihydroxytaxusin + oxidized [NADPH--hemoprotein reductase] + H2O + H(+). The enzyme catalyses 7beta-hydroxytaxusin + reduced [NADPH--hemoprotein reductase] + O2 = 2alpha,7beta-dihydroxytaxusin + oxidized [NADPH--hemoprotein reductase] + H2O + H(+). It participates in alkaloid biosynthesis; taxol biosynthesis. Catalyzes the conversion of taxusin to 7-beta-hydroxytaxusin in taxol biosynthesis. Catalyzes the conversion of 2-alpha-hydroxytaxusin to 2-alpha-7-beta-hydroxytaxusin in taxol biosynthesis. This is Taxoid 7-beta-hydroxylase from Taxus cuspidata (Japanese yew).